The chain runs to 294 residues: Pyridoxal 5'-phosphate synthase subunit PdxS (294 aa).

D-ribose 5-phosphate is bound at residue aspartate 24. Lysine 81 functions as the Schiff-base intermediate with D-ribose 5-phosphate in the catalytic mechanism. Glycine 153 contacts D-ribose 5-phosphate. Residue arginine 165 participates in D-glyceraldehyde 3-phosphate binding. D-ribose 5-phosphate contacts are provided by residues glycine 214 and glycine 235–serine 236.

This sequence belongs to the PdxS/SNZ family. As to quaternary structure, in the presence of PdxT, forms a dodecamer of heterodimers.

The enzyme catalyses aldehydo-D-ribose 5-phosphate + D-glyceraldehyde 3-phosphate + L-glutamine = pyridoxal 5'-phosphate + L-glutamate + phosphate + 3 H2O + H(+). The protein operates within cofactor biosynthesis; pyridoxal 5'-phosphate biosynthesis. Functionally, catalyzes the formation of pyridoxal 5'-phosphate from ribose 5-phosphate (RBP), glyceraldehyde 3-phosphate (G3P) and ammonia. The ammonia is provided by the PdxT subunit. Can also use ribulose 5-phosphate and dihydroxyacetone phosphate as substrates, resulting from enzyme-catalyzed isomerization of RBP and G3P, respectively. The protein is Pyridoxal 5'-phosphate synthase subunit PdxS of Bacillus pumilus (strain SAFR-032).